The following is a 360-amino-acid chain: Protein YIM1-1 (360 aa).

It belongs to the YIM1 family.

It is found in the lipid droplet. The protein localises to the mitochondrion. The protein is Protein YIM1-1 (YIM1-1) of Lachancea thermotolerans (strain ATCC 56472 / CBS 6340 / NRRL Y-8284) (Yeast).